The chain runs to 398 residues: MINDGGAKPETLLRVAEIGGRGRSLVAAQSLRAGQVILRESPLLLYSAFPFLSSSVSPYCDHCFRLLASSAHQKCQSCSLVSFCSPNCFASHTPWLCESLRRLHQSSSSAFSDQPSDRQVQARFLLSAYNLAAASPSDFQILLSLQGSGSSNGDPSCSAGDSAAAGFLHSLLSSVCPSLPVSISPDLTAALLSKDKVNAFGLMEPCSVSNEKRSVRAYGIYPKTSFFNHDCLPNACRFDYVDSASDGNTDIIIRMIHDVPEGREVCLSYFPVNMNYSSRQKRLLEDYGFKCDCDRCKVEFSWSEGEEDENEIMEEMEDQDEQEEMEDSVGENEEEVCGNGVDDESNFPHAYFFVRYMCEKENCFGTLAPLPPKTHDASRVLECNVCGSVKEDEVGVNQ.

The SET domain occupies 11–270 (TLLRVAEIGG…EGREVCLSYF (260 aa)).

This sequence belongs to the class V-like SAM-binding methyltransferase superfamily. Histone-lysine methyltransferase family. SET2 subfamily.

Its subcellular location is the nucleus. It localises to the chromosome. It catalyses the reaction L-lysyl-[histone] + S-adenosyl-L-methionine = N(6)-methyl-L-lysyl-[histone] + S-adenosyl-L-homocysteine + H(+). In terms of biological role, histone methyltransferase. This chain is Histone-lysine N-methyltransferase ASHR2 (ASHR2), found in Arabidopsis thaliana (Mouse-ear cress).